A 946-amino-acid chain; its full sequence is Calcium-transporting ATPase type 2C member 2 (946 aa).

At 1-106 (MVEGRVSEFL…DNSEPVWKKY (106 aa)) the chain is on the cytoplasmic side. Positions 71-95 (VDLHTGLSEFSVTQRRLAHGWNEFV) are interaction with ORAI1. Residues 107-127 (LDQFKNPLILLLLGSALVSVL) traverse the membrane as a helical segment. The Extracellular portion of the chain corresponds to 128 to 129 (TK). Residues 130-150 (EYEDAVSIATAVLVVVTVAFI) form a helical membrane-spanning segment. At 151–231 (QEYRSEKSLE…EAEPCSKTDS (81 aa)) the chain is on the cytoplasmic side. Residues 232–252 (PLTGGGDLTTLSNIVFMGTLV) form a helical membrane-spanning segment. Topologically, residues 253–293 (QYGRGQGVVIGTGESSQFGEVFKMMQAEETPKTPLQKSMDR) are extracellular. Phosphothreonine is present on T264. Phosphoserine occurs at positions 267 and 268. The helical transmembrane segment at 294 to 314 (LGKQLTLFSFGIIGLIMLIGW) threads the bilayer. Topologically, residues 315–331 (SQGKQLLSMFTIGVSLA) are cytoplasmic. 4 residues coordinate Ca(2+): V332, A333, I335, and E337. The chain crosses the membrane as a helical span at residues 332-352 (VAAIPEGLPIVVMVTLVLGVL). Over 353-750 (RMAKKRVIVK…ISALSLITLS (398 aa)) the chain is Extracellular. The 4-aspartylphosphate intermediate role is filled by D379. Mg(2+)-binding residues include D674 and D678. A helical membrane pass occupies residues 751–771 (TVFNLPSPLNAMQILWINIIM). The Ca(2+) site is built by N768 and D772. Residues 772–804 (DGPPAQSLGVEPVDKDAFRQPPRSVRDTILSRA) are Cytoplasmic-facing. Residues 805 to 825 (LILKILMSAAIIISGTLFIFW) traverse the membrane as a helical segment. The Extracellular portion of the chain corresponds to 826 to 837 (KEMPEDRASTPR). Residues 838–855 (TTTMTFTCFVFFDLFNAL) form a helical membrane-spanning segment. Residues 856 to 874 (TCRSQTKLIFEIGFLRNHM) lie on the Cytoplasmic side of the membrane. The helical transmembrane segment at 875 to 895 (FLYSVLGSILGQLAVIYIPPL) threads the bilayer. Residues 896-905 (QRVFQTENLG) are Extracellular-facing. A helical membrane pass occupies residues 906-926 (ALDLLFLTGLASSVFILSELL). Topologically, residues 927 to 946 (KLCEKYCCSPKRVQMHPEDV) are cytoplasmic.

This sequence belongs to the cation transport ATPase (P-type) (TC 3.A.3) family. Type IIA subfamily. Interacts (via N-terminus) with ORAI1 (via N- and C-termini); this interaction regulates Ca(2+) influx at the plasma membrane. In terms of tissue distribution, highly expressed in the gastrointestinal and respiratory tracts, prostate, thyroid, salivary, and mammary glands. Expressed in colon epithelial cells (at protein level). Expressed in brain and testis (at protein level).

It localises to the golgi apparatus. It is found in the trans-Golgi network membrane. The protein localises to the cell membrane. Its subcellular location is the basolateral cell membrane. The catalysed reaction is Ca(2+)(in) + ATP + H2O = Ca(2+)(out) + ADP + phosphate + H(+). It carries out the reaction Mn(2+)(in) + ATP + H2O = Mn(2+)(out) + ADP + phosphate + H(+). ATP-driven pump that supplies the Golgi apparatus with Ca(2+) and Mn(2+) ions, both essential cofactors for processing and trafficking of newly synthesized proteins in the secretory pathway. Within a catalytic cycle, acquires Ca(2+) or Mn(2+) ions on the cytoplasmic side of the membrane and delivers them to the lumenal side. The transfer of ions across the membrane is coupled to ATP hydrolysis and is associated with a transient phosphorylation that shifts the pump conformation from inward-facing to outward-facing state. Induces Ca(2+) influx independently of its ATP-driven pump function. At the basolateral membrane of mammary epithelial cells, interacts with Ca(2+) channel ORAI1 and mediates Ca(2+) entry independently of the Ca(2+) content of endoplasmic reticulum or Golgi stores. May facilitate transepithelial transport of large quantities of Ca(2+) for milk secretion via activation of Ca(2+) influx channels at the plasma membrane and active Ca(2+) transport at the Golgi apparatus. The protein is Calcium-transporting ATPase type 2C member 2 of Homo sapiens (Human).